The chain runs to 506 residues: DEAD-box ATP-dependent RNA helicase CshA (506 aa).

The Q motif motif lies at 2–30 (QNFKELGISDNTVQSLESMGFKEPTPIQK). The Helicase ATP-binding domain occupies 33-203 (IPYALQGIDI…QQFMKSPKII (171 aa)). 46-53 (AQTGTGKT) is a binding site for ATP. The DEAD box signature appears at 150–153 (DEAD). One can recognise a Helicase C-terminal domain in the interval 214–375 (QIEEFYTIVK…LRPPHRKEVL (162 aa)). The disordered stretch occupies residues 436–506 (EKPLSRKGRN…KGRTFADHQK (71 aa)). The span at 468–480 (KRSKGYSSKKKST) shows a compositional bias: basic residues.

This sequence belongs to the DEAD box helicase family. CshA subfamily. Oligomerizes, may be a member of the RNA degradosome.

The protein resides in the cytoplasm. The catalysed reaction is ATP + H2O = ADP + phosphate + H(+). Functionally, DEAD-box RNA helicase possibly involved in RNA degradation. Unwinds dsRNA in both 5'- and 3'-directions, has RNA-dependent ATPase activity. The sequence is that of DEAD-box ATP-dependent RNA helicase CshA from Staphylococcus aureus (strain MRSA252).